We begin with the raw amino-acid sequence, 119 residues long: Large ribosomal subunit protein uL18 (119 aa).

This sequence belongs to the universal ribosomal protein uL18 family. Part of the 50S ribosomal subunit; part of the 5S rRNA/L5/L18/L25 subcomplex. Contacts the 5S and 23S rRNAs.

Its function is as follows. This is one of the proteins that bind and probably mediate the attachment of the 5S RNA into the large ribosomal subunit, where it forms part of the central protuberance. The chain is Large ribosomal subunit protein uL18 from Ruegeria pomeroyi (strain ATCC 700808 / DSM 15171 / DSS-3) (Silicibacter pomeroyi).